We begin with the raw amino-acid sequence, 343 residues long: Dimethyladenosine transferase 1, mitochondrial (343 aa).

The N-terminal 27 residues, 1–27, are a transit peptide targeting the mitochondrion; that stretch reads MAASGKLSTWRLPPLPTIREIIKLLRV. Leu-38, Gly-63, Glu-85, Lys-86, Asp-111, Val-112, and Asn-141 together coordinate S-adenosyl-L-methionine.

It belongs to the class I-like SAM-binding methyltransferase superfamily. rRNA adenine N(6)-methyltransferase family. KsgA subfamily. As to quaternary structure, interacts with mitochondrial RNA polymerase POLRMT. Interacts with TFAM. Bound to the maturing mtSSU until the late stages of assembly.

It localises to the mitochondrion. The enzyme catalyses adenosine(N)/adenosine(N+1) in rRNA + 4 S-adenosyl-L-methionine = N(6)-dimethyladenosine(N)/N(6)-dimethyladenosine(N+1) in rRNA + 4 S-adenosyl-L-homocysteine + 4 H(+). In terms of biological role, S-adenosyl-L-methionine-dependent methyltransferase which specifically dimethylates mitochondrial 12S rRNA at the conserved stem loop. Also required for basal transcription of mitochondrial DNA, probably via its interaction with POLRMT and TFAM. Stimulates transcription independently of the methyltransferase activity. Functionally, mitochondrial methyltransferase which uses S-adenosyl methionine to dimethylate two highly conserved adjacent adenosine residues (A1583 and A1584) within the loop of helix 45 at the 3-prime end of 12S rRNA, thereby regulating the assembly or stability of the small subunit of the mitochondrial ribosome. Also required for basal transcription of mitochondrial DNA, probably via its interaction with POLRMT and TFAM. Stimulates transcription independently of the methyltransferase activity. This chain is Dimethyladenosine transferase 1, mitochondrial (TFB1M), found in Pongo abelii (Sumatran orangutan).